The primary structure comprises 382 residues: Proton extrusion protein PxcA (382 aa).

A run of 4 helical transmembrane segments spans residues 162-182 (ILLL…TYIV), 257-277 (AIKN…VCLV), 305-325 (IILF…TVLL), and 340-360 (FILL…KYWI).

Belongs to the CemA family.

Its subcellular location is the cell inner membrane. Required for H(+) efflux immediately after light irradiation to form a rapid H(+) concentration gradient across the thylakoid membranes. Together with PxcL, contributes to transient H(+) uptake following dark to light transition. The polypeptide is Proton extrusion protein PxcA (Parasynechococcus marenigrum (strain WH8102)).